A 308-amino-acid polypeptide reads, in one-letter code: D-alanine--D-alanine ligase (308 aa).

Residues 104–304 (KQALVPHGIP…YAELVERIVE (201 aa)) form the ATP-grasp domain. Residue 131 to 187 (LPRPYVLKPVNEGSSVGVAIVRDDSNYGNPISRDALGPWQQFDRLLAEPFIKGRELT) coordinates ATP. Mg(2+) is bound by residues Asp-255, Glu-271, and Asn-273.

The protein belongs to the D-alanine--D-alanine ligase family. It depends on Mg(2+) as a cofactor. Mn(2+) is required as a cofactor.

It localises to the cytoplasm. It carries out the reaction 2 D-alanine + ATP = D-alanyl-D-alanine + ADP + phosphate + H(+). It functions in the pathway cell wall biogenesis; peptidoglycan biosynthesis. Functionally, cell wall formation. The polypeptide is D-alanine--D-alanine ligase (Sphingopyxis alaskensis (strain DSM 13593 / LMG 18877 / RB2256) (Sphingomonas alaskensis)).